Reading from the N-terminus, the 366-residue chain is Aminomethyltransferase (366 aa).

It belongs to the GcvT family. The glycine cleavage system is composed of four proteins: P, T, L and H.

The enzyme catalyses N(6)-[(R)-S(8)-aminomethyldihydrolipoyl]-L-lysyl-[protein] + (6S)-5,6,7,8-tetrahydrofolate = N(6)-[(R)-dihydrolipoyl]-L-lysyl-[protein] + (6R)-5,10-methylene-5,6,7,8-tetrahydrofolate + NH4(+). In terms of biological role, the glycine cleavage system catalyzes the degradation of glycine. This is Aminomethyltransferase from Chlorobium chlorochromatii (strain CaD3).